We begin with the raw amino-acid sequence, 446 residues long: Probable cytosolic iron-sulfur protein assembly protein 1 (446 aa).

WD repeat units follow at residues 17-59 (AFKP…AHSN), 63-106 (GHTR…PLEE), 143-182 (GHENEIKSAAFSPSGQYLATCSRDKSIWIWEDVGANEGDD), 192-241 (EHDG…EWAC), 247-291 (GHSS…PEAS), 330-368 (VHTRDIYSASWSKNGRVASTGSDGSILVYEECAPSNPST), and 398-446 (GHGP…SIEL). Residues 106–128 (EGTKKGESTEIDVTRRRNNNDSD) show a composition bias toward basic and acidic residues. Residues 106 to 133 (EGTKKGESTEIDVTRRRNNNDSDKDNDD) form a disordered region.

This sequence belongs to the WD repeat CIA1 family.

In terms of biological role, essential component of the cytosolic iron-sulfur (Fe/S) protein assembly machinery. Required for the maturation of extramitochondrial Fe/S proteins. This is Probable cytosolic iron-sulfur protein assembly protein 1 from Pyricularia oryzae (strain 70-15 / ATCC MYA-4617 / FGSC 8958) (Rice blast fungus).